The chain runs to 151 residues: uncharacterized protein (151 aa).

This is an uncharacterized protein from Gallid herpesvirus 2 (strain GA) (GaHV-2).